A 449-amino-acid polypeptide reads, in one-letter code: CCA-adding enzyme (449 aa).

ATP is bound by residues Ser53 and Lys56. Residues Ser53 and Lys56 each coordinate CTP. Mg(2+)-binding residues include Asp65, Asp67, and Asp119. ATP contacts are provided by His142, Lys161, and Tyr170. CTP is bound by residues His142, Lys161, and Tyr170.

It belongs to the tRNA nucleotidyltransferase/poly(A) polymerase family. Archaeal CCA-adding enzyme subfamily. As to quaternary structure, homodimer. Mg(2+) serves as cofactor.

The enzyme catalyses a tRNA precursor + 2 CTP + ATP = a tRNA with a 3' CCA end + 3 diphosphate. It catalyses the reaction a tRNA with a 3' CCA end + 2 CTP + ATP = a tRNA with a 3' CCACCA end + 3 diphosphate. In terms of biological role, catalyzes the addition and repair of the essential 3'-terminal CCA sequence in tRNAs without using a nucleic acid template. Adds these three nucleotides in the order of C, C, and A to the tRNA nucleotide-73, using CTP and ATP as substrates and producing inorganic pyrophosphate. tRNA 3'-terminal CCA addition is required both for tRNA processing and repair. Also involved in tRNA surveillance by mediating tandem CCA addition to generate a CCACCA at the 3' terminus of unstable tRNAs. While stable tRNAs receive only 3'-terminal CCA, unstable tRNAs are marked with CCACCA and rapidly degraded. The protein is CCA-adding enzyme of Pyrococcus horikoshii (strain ATCC 700860 / DSM 12428 / JCM 9974 / NBRC 100139 / OT-3).